Reading from the N-terminus, the 329-residue chain is 4-hydroxythreonine-4-phosphate dehydrogenase (329 aa).

Substrate contacts are provided by H136 and T137. 3 residues coordinate a divalent metal cation: H166, H211, and H266. Substrate contacts are provided by K274, N283, and R292.

It belongs to the PdxA family. Homodimer. The cofactor is Zn(2+). It depends on Mg(2+) as a cofactor. Co(2+) is required as a cofactor.

It localises to the cytoplasm. The enzyme catalyses 4-(phosphooxy)-L-threonine + NAD(+) = 3-amino-2-oxopropyl phosphate + CO2 + NADH. It participates in cofactor biosynthesis; pyridoxine 5'-phosphate biosynthesis; pyridoxine 5'-phosphate from D-erythrose 4-phosphate: step 4/5. Catalyzes the NAD(P)-dependent oxidation of 4-(phosphooxy)-L-threonine (HTP) into 2-amino-3-oxo-4-(phosphooxy)butyric acid which spontaneously decarboxylates to form 3-amino-2-oxopropyl phosphate (AHAP). The sequence is that of 4-hydroxythreonine-4-phosphate dehydrogenase from Salmonella arizonae (strain ATCC BAA-731 / CDC346-86 / RSK2980).